The sequence spans 131 residues: Small ribosomal subunit protein uS11 (131 aa).

This sequence belongs to the universal ribosomal protein uS11 family. In terms of assembly, part of the 30S ribosomal subunit. Interacts with proteins S7 and S18. Binds to IF-3.

Located on the platform of the 30S subunit, it bridges several disparate RNA helices of the 16S rRNA. Forms part of the Shine-Dalgarno cleft in the 70S ribosome. The protein is Small ribosomal subunit protein uS11 of Wigglesworthia glossinidia brevipalpis.